The chain runs to 306 residues: Epoxyqueuosine reductase (306 aa).

The active-site Proton donor is the Asp-131. A 4Fe-4S ferredoxin-type domain is found at 173-205 (LDLTYDHPVTDHCGTCTACIDACPTQAIVQPYV). Cys-185, Cys-188, Cys-191, Cys-195, Cys-211, Cys-238, Cys-241, and Cys-245 together coordinate [4Fe-4S] cluster.

Belongs to the QueG family. As to quaternary structure, monomer. Cob(II)alamin serves as cofactor. The cofactor is [4Fe-4S] cluster.

Its subcellular location is the cytoplasm. The enzyme catalyses epoxyqueuosine(34) in tRNA + AH2 = queuosine(34) in tRNA + A + H2O. It participates in tRNA modification; tRNA-queuosine biosynthesis. In terms of biological role, catalyzes the conversion of epoxyqueuosine (oQ) to queuosine (Q), which is a hypermodified base found in the wobble positions of tRNA(Asp), tRNA(Asn), tRNA(His) and tRNA(Tyr). The sequence is that of Epoxyqueuosine reductase from Cellulophaga algicola (strain DSM 14237 / IC166 / ACAM 630).